Consider the following 771-residue polypeptide: Phosphoglycerate kinase (771 aa).

A phosphoglycerate kinase region spans residues 1–406 (MKKLITDLNL…PGIDAIQNYE (406 aa)). Substrate contacts are provided by residues 20–22 (DLN), Arg35, 58–61 (HLGR), Arg118, and Arg155. ATP-binding positions include Lys206, Gly295, Glu334, and 361-364 (GGDS). A unknown region spans residues 407 to 771 (QTYEQYDSQV…KRFWFFGRKR (365 aa)).

The protein in the N-terminal section; belongs to the phosphoglycerate kinase family. In terms of assembly, monomer.

The protein resides in the cytoplasm. It carries out the reaction (2R)-3-phosphoglycerate + ATP = (2R)-3-phospho-glyceroyl phosphate + ADP. It functions in the pathway carbohydrate degradation; glycolysis; pyruvate from D-glyceraldehyde 3-phosphate: step 2/5. The sequence is that of Phosphoglycerate kinase (pgk) from Mycoplasmopsis pulmonis (strain UAB CTIP) (Mycoplasma pulmonis).